An 80-amino-acid chain; its full sequence is MPKKTQQSVSFEASLQQLEQIVSRLESGDLALEEALNEFERGVQLARAGQQVLQQAEQRVQILLSDDKNAELTPFTPEKE.

The protein belongs to the XseB family. In terms of assembly, heterooligomer composed of large and small subunits.

Its subcellular location is the cytoplasm. The enzyme catalyses Exonucleolytic cleavage in either 5'- to 3'- or 3'- to 5'-direction to yield nucleoside 5'-phosphates.. In terms of biological role, bidirectionally degrades single-stranded DNA into large acid-insoluble oligonucleotides, which are then degraded further into small acid-soluble oligonucleotides. The chain is Exodeoxyribonuclease 7 small subunit from Erwinia tasmaniensis (strain DSM 17950 / CFBP 7177 / CIP 109463 / NCPPB 4357 / Et1/99).